Here is a 135-residue protein sequence, read N- to C-terminus: Galectin-1 (135 aa).

Alanine 2 is modified (N-acetylalanine). The Galectin domain maps to 4–135 (GLVASNLNLK…DFKIKCVAFD (132 aa)). Lysine 13 and lysine 29 each carry N6-acetyllysine. Phosphoserine; by FAM20C is present on serine 30. A beta-D-galactoside is bound by residues 45–49 (HFNPR), histidine 53, asparagine 62, and 69–72 (WGTE). Lysine 108 is subject to N6-acetyllysine; alternate. At lysine 108 the chain carries N6-succinyllysine; alternate. N6-acetyllysine is present on lysine 128.

As to quaternary structure, homodimer. Binds LGALS3BP. Interacts with CD2, CD3, CD4, CD6, CD7, CD43, ALCAM and CD45. Interacts with laminin (via poly-N-acetyllactosamine). Interacts with SUSD2. Interacts with cargo receptor TMED10; the interaction mediates the translocation from the cytoplasm into the ERGIC (endoplasmic reticulum-Golgi intermediate compartment) and thereby secretion. Interacts with CD69. In terms of tissue distribution, expressed in placenta, maternal decidua and fetal membranes. Within placenta, expressed in trophoblasts, stromal cells, villous endothelium, syncytiotrophoblast apical membrane and villous stroma. Within fetal membranes, expressed in amnion, chorioamniotic mesenchyma and chorion (at protein level). Expressed in cardiac, smooth, and skeletal muscle, neurons, thymus, kidney and hematopoietic cells.

It is found in the secreted. Its subcellular location is the extracellular space. The protein localises to the extracellular matrix. The protein resides in the cytoplasm. In terms of biological role, lectin that binds beta-galactoside and a wide array of complex carbohydrates. Plays a role in regulating apoptosis, cell proliferation and cell differentiation. Inhibits CD45 protein phosphatase activity and therefore the dephosphorylation of Lyn kinase. Strong inducer of T-cell apoptosis. Plays a negative role in Th17 cell differentiation via activation of the receptor CD69. The sequence is that of Galectin-1 from Homo sapiens (Human).